The primary structure comprises 158 residues: SsrA-binding protein (158 aa).

This sequence belongs to the SmpB family.

The protein resides in the cytoplasm. Required for rescue of stalled ribosomes mediated by trans-translation. Binds to transfer-messenger RNA (tmRNA), required for stable association of tmRNA with ribosomes. tmRNA and SmpB together mimic tRNA shape, replacing the anticodon stem-loop with SmpB. tmRNA is encoded by the ssrA gene; the 2 termini fold to resemble tRNA(Ala) and it encodes a 'tag peptide', a short internal open reading frame. During trans-translation Ala-aminoacylated tmRNA acts like a tRNA, entering the A-site of stalled ribosomes, displacing the stalled mRNA. The ribosome then switches to translate the ORF on the tmRNA; the nascent peptide is terminated with the 'tag peptide' encoded by the tmRNA and targeted for degradation. The ribosome is freed to recommence translation, which seems to be the essential function of trans-translation. This is SsrA-binding protein from Chloroflexus aggregans (strain MD-66 / DSM 9485).